The chain runs to 38 residues: Small ribosomal subunit protein uS12c (38 aa).

The segment at 1-26 (MPTIQQLIRNARQPIENRKKSPALRG) is disordered.

It belongs to the universal ribosomal protein uS12 family. Part of the 30S ribosomal subunit.

The protein localises to the plastid. It localises to the chloroplast. With S4 and S5 plays an important role in translational accuracy. Located at the interface of the 30S and 50S subunits. The polypeptide is Small ribosomal subunit protein uS12c (rps12) (Pinus contorta (Shore pine)).